The primary structure comprises 94 residues: Pyrimidine/purine nucleoside phosphorylase (94 aa).

The protein belongs to the nucleoside phosphorylase PpnP family.

The catalysed reaction is a purine D-ribonucleoside + phosphate = a purine nucleobase + alpha-D-ribose 1-phosphate. The enzyme catalyses adenosine + phosphate = alpha-D-ribose 1-phosphate + adenine. It carries out the reaction cytidine + phosphate = cytosine + alpha-D-ribose 1-phosphate. It catalyses the reaction guanosine + phosphate = alpha-D-ribose 1-phosphate + guanine. The catalysed reaction is inosine + phosphate = alpha-D-ribose 1-phosphate + hypoxanthine. The enzyme catalyses thymidine + phosphate = 2-deoxy-alpha-D-ribose 1-phosphate + thymine. It carries out the reaction uridine + phosphate = alpha-D-ribose 1-phosphate + uracil. It catalyses the reaction xanthosine + phosphate = alpha-D-ribose 1-phosphate + xanthine. In terms of biological role, catalyzes the phosphorolysis of diverse nucleosides, yielding D-ribose 1-phosphate and the respective free bases. Can use uridine, adenosine, guanosine, cytidine, thymidine, inosine and xanthosine as substrates. Also catalyzes the reverse reactions. The sequence is that of Pyrimidine/purine nucleoside phosphorylase from Salmonella newport (strain SL254).